Reading from the N-terminus, the 193-residue chain is Potassium-transporting ATPase KdpC subunit (193 aa).

A helical membrane pass occupies residues 7–27 (PLVVIFAVLTVVTGMAYPAVM).

This sequence belongs to the KdpC family. As to quaternary structure, the system is composed of three essential subunits: KdpA, KdpB and KdpC.

It localises to the cell inner membrane. Part of the high-affinity ATP-driven potassium transport (or Kdp) system, which catalyzes the hydrolysis of ATP coupled with the electrogenic transport of potassium into the cytoplasm. This subunit acts as a catalytic chaperone that increases the ATP-binding affinity of the ATP-hydrolyzing subunit KdpB by the formation of a transient KdpB/KdpC/ATP ternary complex. This Burkholderia vietnamiensis (strain G4 / LMG 22486) (Burkholderia cepacia (strain R1808)) protein is Potassium-transporting ATPase KdpC subunit.